Consider the following 396-residue polypeptide: Calsequestrin-1 (396 aa).

Positions 1–34 are cleaved as a signal peptide; sequence MSATDRMGPRAVPGLRLALLLLLVLGTPKSGVQG. A Phosphotyrosine modification is found at Tyr-43. The residue at position 81 (Ser-81) is a Phosphoserine. Position 124 is a phosphothreonine (Thr-124). Ser-216 is modified (phosphoserine). N-linked (GlcNAc...) asparagine glycosylation occurs at Asn-350.

The protein belongs to the calsequestrin family. In terms of assembly, monomer; increases in response to a depletion of intracellular calcium. Homodimer. Homotetramer and homopolymer. Can form linear homooligomers. Ca(2+) ions promote oligomerization. Interacts (via C-terminal end and preferentially with the monomeric form) with STIM1; this interaction increases in response to a depletion of intracellular calcium, decreases both STIM1 aggregation and clustering, interaction of STIM1 with ORAI1 and store-operated Ca(2+) entry (SOCE) activity. Interacts with ASPH and TRDN. In terms of processing, N-glycosylated. As to expression, expressed in myoblasts (at protein level).

The protein resides in the endoplasmic reticulum. It is found in the sarcoplasmic reticulum. It localises to the sarcoplasmic reticulum lumen. Its subcellular location is the sarcoplasmic reticulum membrane. The protein localises to the mitochondrion matrix. In terms of biological role, calsequestrin is a high-capacity, moderate affinity, calcium-binding protein and thus acts as an internal calcium store in muscle. Calcium ions are bound by clusters of acidic residues at the protein surface, often at the interface between subunits. Can bind around 80 Ca(2+) ions. Regulates the release of lumenal Ca(2+) via the calcium release channel RYR1; this plays an important role in triggering muscle contraction. Negatively regulates store-operated Ca(2+) entry (SOCE) activity. The protein is Calsequestrin-1 (CASQ1) of Homo sapiens (Human).